The following is a 474-amino-acid chain: tRNA-2-methylthio-N(6)-dimethylallyladenosine synthase (474 aa).

An MTTase N-terminal domain is found at 3 to 120 (KKLHIKTWGC…LPDMIEQVRR (118 aa)). Residues Cys-12, Cys-49, Cys-83, Cys-157, Cys-161, and Cys-164 each coordinate [4Fe-4S] cluster. Residues 143-375 (RAEGPTAFVS…QDRITQQAMR (233 aa)) enclose the Radical SAM core domain. Residues 378-441 (RHMMGTVQRI…TNSLRGKFIR (64 aa)) enclose the TRAM domain.

It belongs to the methylthiotransferase family. MiaB subfamily. Monomer. It depends on [4Fe-4S] cluster as a cofactor.

It is found in the cytoplasm. The catalysed reaction is N(6)-dimethylallyladenosine(37) in tRNA + (sulfur carrier)-SH + AH2 + 2 S-adenosyl-L-methionine = 2-methylsulfanyl-N(6)-dimethylallyladenosine(37) in tRNA + (sulfur carrier)-H + 5'-deoxyadenosine + L-methionine + A + S-adenosyl-L-homocysteine + 2 H(+). Catalyzes the methylthiolation of N6-(dimethylallyl)adenosine (i(6)A), leading to the formation of 2-methylthio-N6-(dimethylallyl)adenosine (ms(2)i(6)A) at position 37 in tRNAs that read codons beginning with uridine. This is tRNA-2-methylthio-N(6)-dimethylallyladenosine synthase from Shewanella putrefaciens (strain CN-32 / ATCC BAA-453).